Reading from the N-terminus, the 135-residue chain is uncharacterized protein (135 aa).

The 99-residue stretch at 25 to 123 (CPIQHVVDLL…LGSDWLEQES (99 aa)) folds into the HTH hxlR-type domain.

This is an uncharacterized protein from Synechocystis sp. (strain ATCC 27184 / PCC 6803 / Kazusa).